The sequence spans 212 residues: UPF0502 protein ECA2523 (212 aa).

The protein belongs to the UPF0502 family.

The sequence is that of UPF0502 protein ECA2523 from Pectobacterium atrosepticum (strain SCRI 1043 / ATCC BAA-672) (Erwinia carotovora subsp. atroseptica).